We begin with the raw amino-acid sequence, 408 residues long: Ribosomal RNA large subunit methyltransferase DR_0049 (408 aa).

Belongs to the methyltransferase superfamily.

It carries out the reaction cytidine(2499) in 23S rRNA + S-adenosyl-L-methionine = 5-methylcytidine(2499) in 23S rRNA + S-adenosyl-L-homocysteine + H(+). Its function is as follows. Specifically methylates the cytosine at position 2499 (m5C2499) of 23S rRNA. This is Ribosomal RNA large subunit methyltransferase DR_0049 from Deinococcus radiodurans (strain ATCC 13939 / DSM 20539 / JCM 16871 / CCUG 27074 / LMG 4051 / NBRC 15346 / NCIMB 9279 / VKM B-1422 / R1).